The following is a 485-amino-acid chain: Cholesterol 16,22-dihydroxylase CYP90G4 (485 aa).

A helical membrane pass occupies residues 4–24 (VVILFFLFPTLLVLVVAVLGL). Heme is bound at residue cysteine 432.

Belongs to the cytochrome P450 family. Mainly expressed in leaves and, at low levels, in roots and stems.

It localises to the membrane. It catalyses the reaction cholesterol + 2 reduced [NADPH--hemoprotein reductase] + 2 O2 = (16S,22S)-dihydroxycholesterol + 2 oxidized [NADPH--hemoprotein reductase] + 2 H2O + 2 H(+). Its pathway is steroid metabolism; cholesterol metabolism. Involved in the biosynthesis of spiroketal steroid and saponin natural products from cholesterol such as diosgenin and analogs (e.g. furostanol and spirostanol), plant defense compounds used as main precursors for the industrial production of steroid hormones. During the 5,6-spiroketalization of cholesterol, catalyzes the hydroxylation of cholesterol to form 16S,22S-dihydroxycholesterol and, possibly, the subsequent conversion of 16S,22S-dihydroxycholesterol into 16-oxo-22-hydroxy-cholesterol and 16-hydroxy-22-oxo-cholesterol. 16-hydroxy-22-oxo-cholesterol submit a spontaneous reaction leading to the production of furostanol-type steroid diastereomers, precursors of diosgenin. The protein is Cholesterol 16,22-dihydroxylase CYP90G4 of Paris polyphylla (Daiswa polyphylla).